The following is a 946-amino-acid chain: Bifunctional glutamine synthetase adenylyltransferase/adenylyl-removing enzyme (946 aa).

The adenylyl removase stretch occupies residues 1 to 440 (MKPLSSPLQQ…VFNELIGDDE (440 aa)). Residues 449-946 (SEQWRELWQD…ASWQKWLVEE (498 aa)) are adenylyl transferase.

This sequence belongs to the GlnE family. Requires Mg(2+) as cofactor.

The enzyme catalyses [glutamine synthetase]-O(4)-(5'-adenylyl)-L-tyrosine + phosphate = [glutamine synthetase]-L-tyrosine + ADP. It catalyses the reaction [glutamine synthetase]-L-tyrosine + ATP = [glutamine synthetase]-O(4)-(5'-adenylyl)-L-tyrosine + diphosphate. Involved in the regulation of glutamine synthetase GlnA, a key enzyme in the process to assimilate ammonia. When cellular nitrogen levels are high, the C-terminal adenylyl transferase (AT) inactivates GlnA by covalent transfer of an adenylyl group from ATP to specific tyrosine residue of GlnA, thus reducing its activity. Conversely, when nitrogen levels are low, the N-terminal adenylyl removase (AR) activates GlnA by removing the adenylyl group by phosphorolysis, increasing its activity. The regulatory region of GlnE binds the signal transduction protein PII (GlnB) which indicates the nitrogen status of the cell. This Shigella dysenteriae serotype 1 (strain Sd197) protein is Bifunctional glutamine synthetase adenylyltransferase/adenylyl-removing enzyme.